We begin with the raw amino-acid sequence, 121 residues long: Small ribosomal subunit protein uS13 (121 aa).

A disordered region spans residues 92 to 121; sequence HRMGLPCRGQKTKTNARTRKGPRRGAARRK. Positions 101 to 121 are enriched in basic residues; it reads QKTKTNARTRKGPRRGAARRK.

It belongs to the universal ribosomal protein uS13 family. Part of the 30S ribosomal subunit. Forms a loose heterodimer with protein S19. Forms two bridges to the 50S subunit in the 70S ribosome.

In terms of biological role, located at the top of the head of the 30S subunit, it contacts several helices of the 16S rRNA. In the 70S ribosome it contacts the 23S rRNA (bridge B1a) and protein L5 of the 50S subunit (bridge B1b), connecting the 2 subunits; these bridges are implicated in subunit movement. Contacts the tRNAs in the A and P-sites. This chain is Small ribosomal subunit protein uS13, found in Desulfotalea psychrophila (strain LSv54 / DSM 12343).